The sequence spans 338 residues: Glycerol-3-phosphate dehydrogenase [NAD(P)+] (338 aa).

4 residues coordinate NADPH: S14, Y15, H35, and K109. K109, G138, and T140 together coordinate sn-glycerol 3-phosphate. A142 contacts NADPH. The sn-glycerol 3-phosphate site is built by K194, D247, S257, R258, and N259. K194 acts as the Proton acceptor in catalysis. Position 258 (R258) interacts with NADPH. The NADPH site is built by V282 and E284.

The protein belongs to the NAD-dependent glycerol-3-phosphate dehydrogenase family.

It localises to the cytoplasm. The catalysed reaction is sn-glycerol 3-phosphate + NAD(+) = dihydroxyacetone phosphate + NADH + H(+). It carries out the reaction sn-glycerol 3-phosphate + NADP(+) = dihydroxyacetone phosphate + NADPH + H(+). It functions in the pathway membrane lipid metabolism; glycerophospholipid metabolism. In terms of biological role, catalyzes the reduction of the glycolytic intermediate dihydroxyacetone phosphate (DHAP) to sn-glycerol 3-phosphate (G3P), the key precursor for phospholipid synthesis. In Shewanella baltica (strain OS185), this protein is Glycerol-3-phosphate dehydrogenase [NAD(P)+].